The sequence spans 432 residues: Tol-Pal system protein TolB (432 aa).

Residues 1-29 (MMRNVWKSGLRRSAWIGLLMVLCVGVARA) form the signal peptide.

Belongs to the TolB family. The Tol-Pal system is composed of five core proteins: the inner membrane proteins TolA, TolQ and TolR, the periplasmic protein TolB and the outer membrane protein Pal. They form a network linking the inner and outer membranes and the peptidoglycan layer.

The protein localises to the periplasm. In terms of biological role, part of the Tol-Pal system, which plays a role in outer membrane invagination during cell division and is important for maintaining outer membrane integrity. This chain is Tol-Pal system protein TolB, found in Ralstonia nicotianae (strain ATCC BAA-1114 / GMI1000) (Ralstonia solanacearum).